A 210-amino-acid polypeptide reads, in one-letter code: Tumor protein D53 homolog (210 aa).

A coiled-coil region spans residues 22-73; sequence VTDVDFTSMISEEEKEELKAELAKLEDEISTLRQVLAAKEKHLIEIKQKLGM. Positions 185 to 197 are enriched in polar residues; sequence SSTAHASAQSSLA. The tract at residues 185–210 is disordered; the sequence is SSTAHASAQSSLAGTRLPESEEELQC.

This sequence belongs to the TPD52 family. As to quaternary structure, forms a homodimer or heterodimer with other members of the family.

The protein is Tumor protein D53 homolog (TPD52L1) of Gallus gallus (Chicken).